The sequence spans 73 residues: Putative defensin-like protein 33 (73 aa).

The first 25 residues, M1–A25, serve as a signal peptide directing secretion. 3 cysteine pairs are disulfide-bonded: C33–C59, C45–C68, and C49–C70.

The protein belongs to the DEFL family.

It localises to the secreted. The sequence is that of Putative defensin-like protein 33 from Arabidopsis thaliana (Mouse-ear cress).